Here is a 375-residue protein sequence, read N- to C-terminus: Chaperone protein DnaJ (375 aa).

Residues 5-68 form the J domain; the sequence is DYYEILGVSK…KKRAQYDQFG (64 aa). The CR-type zinc-finger motif lies at 135–217; sequence GISKNINYDR…CYGKKVINER (83 aa). Zn(2+) is bound by residues C148, C151, C165, C168, C191, C194, C205, and C208. CXXCXGXG motif repeat units lie at residues 148–155, 165–172, 191–198, and 205–212; these read CHKCQGTG, CTKCHGRG, CHECEGTG, and CEQCYGKK.

The protein belongs to the DnaJ family. As to quaternary structure, homodimer. It depends on Zn(2+) as a cofactor.

It localises to the cytoplasm. Its function is as follows. Participates actively in the response to hyperosmotic and heat shock by preventing the aggregation of stress-denatured proteins and by disaggregating proteins, also in an autonomous, DnaK-independent fashion. Unfolded proteins bind initially to DnaJ; upon interaction with the DnaJ-bound protein, DnaK hydrolyzes its bound ATP, resulting in the formation of a stable complex. GrpE releases ADP from DnaK; ATP binding to DnaK triggers the release of the substrate protein, thus completing the reaction cycle. Several rounds of ATP-dependent interactions between DnaJ, DnaK and GrpE are required for fully efficient folding. Also involved, together with DnaK and GrpE, in the DNA replication of plasmids through activation of initiation proteins. In Ureaplasma parvum serovar 3 (strain ATCC 700970), this protein is Chaperone protein DnaJ.